Consider the following 560-residue polypeptide: Excitatory amino acid transporter 5 (560 aa).

The Cytoplasmic portion of the chain corresponds to 1 to 16 (MVPHAILARGRDVCRR). 3 helical membrane passes run 17-37 (NGLLILSVLSVIVGCLLGFFL), 60-80 (MLKMMILPLVVSSLMSGLASL), and 94-114 (AYYLWTTFMAVIVGIFMVSII). Over 115-216 (HPGSAAQKET…EVVYKSEPGT (102 aa)) the chain is Extracellular. An N-linked (GlcNAc...) asparagine glycan is attached at N191. The next 7 membrane-spanning stretches (helical) occupy residues 217 to 237 (SDGMNVLGIVFFSATMGIMLG), 260 to 280 (IVAVAVWYFPFGIVFLIAGKI), 300 to 320 (VVCGLVLHGLFILPLLYFFIT), 330 to 350 (GILQALLIALATSSSSATLPI), 372 to 392 (VGATINMDGTALYEAVAAIFI), 414 to 434 (AASIGAAGIPQAGLVTMVIVL), and 457 to 477 (FRTMINVLGDALAAGIMAHIC).

This sequence belongs to the dicarboxylate/amino acid:cation symporter (DAACS) (TC 2.A.23) family. SLC1A7 subfamily. In terms of assembly, interacts with the PDZ domains of DLG4. Expressed primarily in retina. Detectable in liver, heart, muscle and brain.

The protein resides in the photoreceptor inner segment membrane. The protein localises to the synaptic cell membrane. It carries out the reaction K(+)(in) + L-glutamate(out) + 3 Na(+)(out) + H(+)(out) = K(+)(out) + L-glutamate(in) + 3 Na(+)(in) + H(+)(in). It catalyses the reaction K(+)(in) + L-aspartate(out) + 3 Na(+)(out) + H(+)(out) = K(+)(out) + L-aspartate(in) + 3 Na(+)(in) + H(+)(in). The enzyme catalyses D-aspartate(out) + K(+)(in) + 3 Na(+)(out) + H(+)(out) = D-aspartate(in) + K(+)(out) + 3 Na(+)(in) + H(+)(in). Its function is as follows. Sodium-dependent, high-affinity amino acid transporter that mediates the uptake of L-glutamate and also L-aspartate and D-aspartate. Functions as a symporter that transports one amino acid molecule together with two or three Na(+) ions and one proton, in parallel with the counter-transport of one K(+) ion. Acts primarily as an inhibitory glutamate-gated chloride channel being a major inhibitory presynaptic receptor at mammalian rod bipolar cell axon terminals. Glutamate binding gates a large Cl(-) conductance that mediates inhibition, affecting visual processing in the retina. This chain is Excitatory amino acid transporter 5, found in Homo sapiens (Human).